We begin with the raw amino-acid sequence, 108 residues long: Small ribosomal subunit protein bS18c (108 aa).

2 stretches are compositionally biased toward basic residues: residues 1 to 19 (MDKS…RRRL) and 97 to 108 (RARKKKIGLLLN). Disordered regions lie at residues 1 to 23 (MDKS…PPIG) and 83 to 108 (QFER…LLLN).

It belongs to the bacterial ribosomal protein bS18 family. Part of the 30S ribosomal subunit.

Its subcellular location is the plastid. It is found in the chloroplast. This Illicium oligandrum (Star anise) protein is Small ribosomal subunit protein bS18c.